The primary structure comprises 412 residues: 8-amino-7-oxononanoate synthase (412 aa).

106–107 (GY) provides a ligand contact to pyridoxal 5'-phosphate. His-131 lines the substrate pocket. 3 residues coordinate pyridoxal 5'-phosphate: Ser-187, His-219, and Thr-247. The residue at position 250 (Lys-250) is an N6-(pyridoxal phosphate)lysine. Residue Thr-370 participates in substrate binding.

This sequence belongs to the class-II pyridoxal-phosphate-dependent aminotransferase family. BioF subfamily. Homodimer. Pyridoxal 5'-phosphate is required as a cofactor.

The enzyme catalyses 6-carboxyhexanoyl-[ACP] + L-alanine + H(+) = (8S)-8-amino-7-oxononanoate + holo-[ACP] + CO2. It functions in the pathway cofactor biosynthesis; biotin biosynthesis. 8-amino-7-oxononanoate synthase; part of the cluster involved in the biosynthesis of biotin (also known as vitamin B8 or vitamin H), a water-soluble vitamin that functions as a prosthetic group of many carboxylases, such as acetyl-CoA carboxylase and pyruvate carboxylase. Catalyzes the decarboxylative condensation of pimeloyl-[acyl-carrier protein] and L-alanine to produce 8-amino-7-oxononanoate (AON). This Emericella nidulans (strain FGSC A4 / ATCC 38163 / CBS 112.46 / NRRL 194 / M139) (Aspergillus nidulans) protein is 8-amino-7-oxononanoate synthase.